Consider the following 197-residue polypeptide: Peptide deformylase (197 aa).

Positions 106 and 148 each coordinate Fe cation. The active site involves E149. H152 is a Fe cation binding site.

It belongs to the polypeptide deformylase family. The cofactor is Fe(2+).

It carries out the reaction N-terminal N-formyl-L-methionyl-[peptide] + H2O = N-terminal L-methionyl-[peptide] + formate. Functionally, removes the formyl group from the N-terminal Met of newly synthesized proteins. Requires at least a dipeptide for an efficient rate of reaction. N-terminal L-methionine is a prerequisite for activity but the enzyme has broad specificity at other positions. This chain is Peptide deformylase, found in Mycolicibacterium vanbaalenii (strain DSM 7251 / JCM 13017 / BCRC 16820 / KCTC 9966 / NRRL B-24157 / PYR-1) (Mycobacterium vanbaalenii).